A 160-amino-acid polypeptide reads, in one-letter code: Phosphopantetheine adenylyltransferase (160 aa).

Ser9 lines the substrate pocket. ATP contacts are provided by residues 9 to 10 (SF) and His17. Residues Lys41, Thr73, and Arg87 each contribute to the substrate site. Residues 88–90 (GMR), Glu98, and 123–129 (YTFFSSS) each bind ATP.

This sequence belongs to the bacterial CoaD family. As to quaternary structure, homohexamer. Mg(2+) serves as cofactor.

Its subcellular location is the cytoplasm. The enzyme catalyses (R)-4'-phosphopantetheine + ATP + H(+) = 3'-dephospho-CoA + diphosphate. The protein operates within cofactor biosynthesis; coenzyme A biosynthesis; CoA from (R)-pantothenate: step 4/5. Reversibly transfers an adenylyl group from ATP to 4'-phosphopantetheine, yielding dephospho-CoA (dPCoA) and pyrophosphate. This Roseiflexus sp. (strain RS-1) protein is Phosphopantetheine adenylyltransferase.